The chain runs to 308 residues: Nodulation protein D 1 (308 aa).

An HTH lysR-type domain is found at Leu6–Thr63. The segment at residues Leu23–Gly42 is a DNA-binding region (H-T-H motif).

This sequence belongs to the LysR transcriptional regulatory family.

Functionally, nodD regulates the expression of the nodABCFE genes which encode other nodulation proteins. NodD is also a negative regulator of its own expression. Binds flavonoids as inducers. This chain is Nodulation protein D 1 (nodD1), found in Rhizobium tropici.